A 78-amino-acid polypeptide reads, in one-letter code: Apolipoprotein C-I (78 aa).

The signal sequence occupies residues methionine 1–glycine 26.

It belongs to the apolipoprotein C1 family.

It is found in the secreted. Functionally, inhibitor of lipoprotein binding to the low density lipoprotein (LDL) receptor, LDL receptor-related protein, and very low density lipoprotein (VLDL) receptor. Associates with high density lipoproteins (HDL) and the triacylglycerol-rich lipoproteins in the plasma and makes up about 10% of the protein of the VLDL and 2% of that of HDL. Appears to interfere directly with fatty acid uptake and is also the major plasma inhibitor of cholesteryl ester transfer protein (CETP). Binds free fatty acids and reduces their intracellular esterification. Modulates the interaction of APOE with beta-migrating VLDL and inhibits binding of beta-VLDL to the LDL receptor-related protein. The sequence is that of Apolipoprotein C-I (APOC1) from Acinonyx jubatus (Cheetah).